The primary structure comprises 493 residues: Guanosine-5'-triphosphate,3'-diphosphate pyrophosphatase (493 aa).

It belongs to the GppA/Ppx family. GppA subfamily.

It carries out the reaction guanosine 3'-diphosphate 5'-triphosphate + H2O = guanosine 3',5'-bis(diphosphate) + phosphate + H(+). The protein operates within purine metabolism; ppGpp biosynthesis; ppGpp from GTP: step 2/2. Its function is as follows. Catalyzes the conversion of pppGpp to ppGpp. Guanosine pentaphosphate (pppGpp) is a cytoplasmic signaling molecule which together with ppGpp controls the 'stringent response', an adaptive process that allows bacteria to respond to amino acid starvation, resulting in the coordinated regulation of numerous cellular activities. This chain is Guanosine-5'-triphosphate,3'-diphosphate pyrophosphatase, found in Salmonella paratyphi A (strain ATCC 9150 / SARB42).